The sequence spans 378 residues: Cytochrome b (378 aa).

The next 4 helical transmembrane spans lie at 34–54, 78–99, 114–134, and 179–199; these read FGSL…FLAM, WFLR…FIHV, WMIG…GYVL, and FFTF…IHLL. Positions 84 and 98 each coordinate heme b. Heme b contacts are provided by H183 and H197. H202 serves as a coordination point for a ubiquinone. The next 4 membrane-spanning stretches (helical) occupy residues 227–247, 289–309, 321–341, and 348–368; these read YKDI…IWKF, LGGV…PFTH, LNQI…WIGA, and YVLT…INPL.

Belongs to the cytochrome b family. As to quaternary structure, the main subunits of complex b-c1 are: cytochrome b, cytochrome c1 and the Rieske protein. Heme b is required as a cofactor.

It localises to the mitochondrion inner membrane. In terms of biological role, component of the ubiquinol-cytochrome c reductase complex (complex III or cytochrome b-c1 complex) that is part of the mitochondrial respiratory chain. The b-c1 complex mediates electron transfer from ubiquinol to cytochrome c. Contributes to the generation of a proton gradient across the mitochondrial membrane that is then used for ATP synthesis. This Aedes aegypti (Yellowfever mosquito) protein is Cytochrome b.